The chain runs to 571 residues: Urease subunit alpha (571 aa).

Positions 133-571 constitute a Urease domain; the sequence is AGIDTHIHFI…VALNQRYFFS (439 aa). Ni(2+)-binding residues include H138, H140, and K221. Residue K221 is modified to N6-carboxylysine. Position 223 (H223) interacts with substrate. Ni(2+) is bound by residues H250 and H276. H324 acts as the Proton donor in catalysis. D364 contacts Ni(2+).

Belongs to the metallo-dependent hydrolases superfamily. Urease alpha subunit family. Heterotrimer of UreA (gamma), UreB (beta) and UreC (alpha) subunits. Three heterotrimers associate to form the active enzyme. The cofactor is Ni cation. Post-translationally, carboxylation allows a single lysine to coordinate two nickel ions.

It localises to the cytoplasm. It catalyses the reaction urea + 2 H2O + H(+) = hydrogencarbonate + 2 NH4(+). It functions in the pathway nitrogen metabolism; urea degradation; CO(2) and NH(3) from urea (urease route): step 1/1. The protein is Urease subunit alpha of Photorhabdus laumondii subsp. laumondii (strain DSM 15139 / CIP 105565 / TT01) (Photorhabdus luminescens subsp. laumondii).